A 1505-amino-acid chain; its full sequence is Myosin-6 (1505 aa).

The region spanning 8-57 (SVGSFVWVEDPDEAWIDGEVVQVNGDEIKVLCTSGKHVVTKISNAYPKDV) is the Myosin N-terminal SH3-like domain. Residues 62 to 731 (SGVDDMTRLA…QMADLDTRRT (670 aa)) form the Myosin motor domain. Residues 156–163 (GESGAGKT) and 209–217 (NNNSSRFGK) each bind ATP. Actin-binding regions lie at residues 495–529 (LIEK…YQTF), 531–554 (THKR…AGDV), 589–612 (FPPM…KQQL), and 612–634 (LVSL…KPNN). IQ domains follow at residues 734–763 (LGRS…SAKQ), 757–786 (LRNS…EAAA), 782–811 (REAA…AAVS), 805–834 (LYSA…TKAA), 830–859 (QTKA…AAIT), and 853–882 (LKKA…AARE). A coiled-coil region spans residues 883–1048 (TGALQAAKNK…AEKKIMHQQT (166 aa)). Positions 1148–1452 (DRLIQMIGSA…ISSMRTLMTE (305 aa)) constitute a Dilute domain.

It belongs to the TRAFAC class myosin-kinesin ATPase superfamily. Myosin family. Plant myosin class XI subfamily. In terms of assembly, homodimer. Interacts with RABC2A and RABD1. As to expression, expressed in flowers, leaves, roots and stems.

The protein resides in the cytoplasm. In terms of biological role, myosin heavy chain that is required for the cell cycle-regulated transport of various organelles and proteins for their segregation. Functions by binding with its tail domain to receptor proteins on organelles and exerting force with its N-terminal motor domain against actin filaments, thereby transporting its cargo along polarized actin cables. Involved in the tip growth of root hair cells. Plays a major role in trafficking of Golgi stacks, mitochondria and peroxisomes during root hair development. Targets the peroxisome through an interaction with RABC2A. Required for development of pavement cells, trichomes, and stigmatic papillae. The chain is Myosin-6 (XI-2) from Arabidopsis thaliana (Mouse-ear cress).